We begin with the raw amino-acid sequence, 1262 residues long: Unconventional myosin-VI (1262 aa).

One can recognise a Myosin N-terminal SH3-like domain in the interval 2–53 (EDGKPVWAPHPTDGFQMGNIVDIGPDSLTIEPLNQKGKTFLALINQVFPAEE). The Myosin motor domain occupies 57–771 (KDVEDNCSLM…KFAEFDQIMK (715 aa)). 151–158 (GESGAGKT) is a binding site for ATP. Serine 267 is modified (phosphoserine). The segment at 273–317 (YLNRGCTRFFANKETDKQILQNRKSPEYVKAGSLKDPLLDDHGDF) is responsible for slow ATPase activity. Threonine 405 carries the post-translational modification Phosphothreonine. A Phosphoserine modification is found at serine 604. Actin-binding stretches follow at residues 651 to 673 (LNLL…KPNL) and 665 to 672 (FIRCIKPN). Positions 782 to 810 (KRVNLWLVCSRWKKVQWCSLSVIKLKNKI) are required for binding calmodulin. Residues 814–834 (AEACIKMQKTIRMWLCKRRHK) enclose the IQ domain. Residues 835–916 (PRIDGLVKVG…EDLLSALQKK (82 aa)) are three-helix bundle. Residues 864–984 (KPEVNRQIKN…EDDEKRIQAE (121 aa)) adopt a coiled-coil conformation. Residues 917 to 984 (KQQEEEAERL…EDDEKRIQAE (68 aa)) are SAH. The disordered stretch occupies residues 933–955 (MEKERKRREEDEERRRKEEEERR). The residue at position 1025 (serine 1025) is a Phosphoserine. The segment at 1034-1253 (LRRGPAVQAT…ESRQARPTYA (220 aa)) is interaction with TAX1BP1 and CALCOCO2/NDP52. The interval 1084–1086 (RRL) is interaction with OPTN. A Phosphoserine modification is found at serine 1123. Residues 1125–1253 (QQNPAAQLPA…ESRQARPTYA (129 aa)) form an interaction with TOM1 region.

Belongs to the TRAFAC class myosin-kinesin ATPase superfamily. Myosin family. In terms of assembly, homodimer; dimerization seems to implicate the unfolding of the three-helix bundle region creating an additional calmodulin binding site, and cargo binding. Able to function as a monomer under specific conditions in vitro. Forms a complex with CFTR and DAB2 in the apical membrane of epithelial cells. Component of the DISP/DOCK7-induced septin displacement complex, at least composed of DOCK7, LRCH3 and MYO6. Binding to calmodulin through a unique insert, not found in other myosins, located in the neck region between the motor domain and the IQ domain appears to contribute to the directionality reversal. This interaction occurs only if the C-terminal lobe of calmodulin is occupied by calcium. Interaction with F-actin/ACTN1 occurs only at the apical brush border domain of the proximal tubule cells. Interacts with DAB2. In vitro, the C-terminal globular tail binds a C-terminal region of DAB2. Interacts with CFTR. Interacts with CABP5. Interacts (via residues 1128-1256) with TOM1 (via residues 392-463). Interacts (via residues 1060-1285) with OPTN. Interacts (via residues 1060-1285) with TAX1BP1 and CALCOCO2/NDP52. Interacts with TOM1L2. Interacts with CLIC5; may work together in a complex which also includes RDX and MYO6 to stabilize linkages between the plasma membrane and subjacent actin cytoskeleton at the base of stereocilia. In terms of processing, phosphorylation in the motor domain, induced by EGF, results in translocation of MYO6 from the cell surface to membrane ruffles and affects F-actin dynamics. Phosphorylated in vitro by p21-activated kinase (PAK). In terms of tissue distribution, within the cochlea, expressed specifically within the sensory hair cells (at protein level). Expressed in the inner and outer plexiform layer of the retina (at protein level). Widely expressed. Expressed in the brain, kidney, liver, and testis.

The protein localises to the golgi apparatus. It localises to the trans-Golgi network membrane. It is found in the nucleus. The protein resides in the cytoplasm. Its subcellular location is the perinuclear region. The protein localises to the membrane. It localises to the clathrin-coated pit. It is found in the cytoplasmic vesicle. The protein resides in the clathrin-coated vesicle. Its subcellular location is the cell projection. The protein localises to the filopodium. It localises to the ruffle membrane. It is found in the microvillus. The protein resides in the cytosol. Myosins are actin-based motor molecules with ATPase activity. Unconventional myosins serve in intracellular movements. Myosin 6 is a reverse-direction motor protein that moves towards the minus-end of actin filaments. Has slow rate of actin-activated ADP release due to weak ATP binding. Functions in a variety of intracellular processes such as vesicular membrane trafficking and cell migration. Required for the structural integrity of the Golgi apparatus via the p53-dependent pro-survival pathway. Appears to be involved in a very early step of clathrin-mediated endocytosis in polarized epithelial cells. Together with TOM1, mediates delivery of endocytic cargo to autophagosomes thereby promoting autophagosome maturation and driving fusion with lysosomes. Links TOM1 with autophagy receptors, such as TAX1BP1; CALCOCO2/NDP52 and OPTN. May act as a regulator of F-actin dynamics. As part of the DISP complex, may regulate the association of septins with actin and thereby regulate the actin cytoskeleton. May play a role in transporting DAB2 from the plasma membrane to specific cellular targets. May play a role in the extension and network organization of neurites. Required for structural integrity of inner ear hair cells. Required for the correct localization of CLIC5 and RDX at the stereocilium base. Modulates RNA polymerase II-dependent transcription. This chain is Unconventional myosin-VI (Myo6), found in Mus musculus (Mouse).